Consider the following 646-residue polypeptide: Long-chain fatty acid transport protein 1 (646 aa).

Residues 1-13 (MRAPGAGTASVAS) are Extracellular-facing. A helical membrane pass occupies residues 14–34 (LALLWFLGLPWTWSAAAAFCV). Residues 35–646 (YVGGGGWRFL…ARICAGDFSL (612 aa)) lie on the Cytoplasmic side of the membrane. Positions 191-475 (EVSEQLGKSL…YVSDSATNKK (285 aa)) are sufficient for oligomerization. Position 246-257 (246-257 (YIYTSGTTGLPK)) interacts with AMP.

Belongs to the ATP-dependent AMP-binding enzyme family. In terms of assembly, self-associates. May function as a homodimer. Interacts with EPRS1; mediates the translocation of SLC27A1 from the cytoplasm to the plasma membrane thereby increasing the uptake of long-chain fatty acids. Interacts with DGAT2 and this interaction is enhanced in the presence of ZFYVE1. Higher expression in white adipose tissue than in heart. Highest expression in skeletal muscle, heart and fat. Lower levels in brain, kidney, lung, liver and testis. No expression in spleen or intestine.

Its subcellular location is the cell membrane. It is found in the mitochondrion outer membrane. It localises to the endomembrane system. The protein resides in the cytoplasm. The enzyme catalyses a fatty acid(in) = a fatty acid(out). The catalysed reaction is (9Z)-octadecenoate(out) = (9Z)-octadecenoate(in). It carries out the reaction hexadecanoate(out) = hexadecanoate(in). It catalyses the reaction (5Z,8Z,11Z,14Z)-eicosatetraenoate(out) = (5Z,8Z,11Z,14Z)-eicosatetraenoate(in). The enzyme catalyses (9Z,12Z)-octadecadienoate(out) = (9Z,12Z)-octadecadienoate(in). The catalysed reaction is a long-chain fatty acid + ATP + CoA = a long-chain fatty acyl-CoA + AMP + diphosphate. It carries out the reaction (5Z,8Z,11Z,14Z)-eicosatetraenoate + ATP + CoA = (5Z,8Z,11Z,14Z)-eicosatetraenoyl-CoA + AMP + diphosphate. It catalyses the reaction a very long-chain fatty acid + ATP + CoA = a very long-chain fatty acyl-CoA + AMP + diphosphate. The enzyme catalyses tetracosanoate + ATP + CoA = tetracosanoyl-CoA + AMP + diphosphate. Inhibited by Triacsin C. Both insulin and muscle contraction stimulate translocation to the plasma membrane in muscle, increasing fatty acid transport activity. In terms of biological role, mediates the import of long-chain fatty acids (LCFA) into the cell by facilitating their transport at the plasma membrane. Also functions as an acyl-CoA ligase catalyzing the ATP-dependent formation of fatty acyl-CoA using LCFA and very-long-chain fatty acids (VLCFA) as substrates, which prevents fatty acid efflux from cells and might drive more fatty acid uptake. May act directly as a bona fide transporter, or alternatively, in a cytoplasmic or membrane-associated multimeric protein complex to trap and draw fatty acids towards accumulation. Plays a pivotal role in regulating available LCFA substrates from exogenous sources in tissues undergoing high levels of beta-oxidation or triglyceride synthesis. May be involved in regulation of cholesterol metabolism. Probably involved in fatty acid transport across the blood barrier. This Mus musculus (Mouse) protein is Long-chain fatty acid transport protein 1.